The sequence spans 379 residues: Putative glutamate--cysteine ligase 2 (379 aa).

This sequence belongs to the glutamate--cysteine ligase type 2 family. YbdK subfamily.

It catalyses the reaction L-cysteine + L-glutamate + ATP = gamma-L-glutamyl-L-cysteine + ADP + phosphate + H(+). Its function is as follows. ATP-dependent carboxylate-amine ligase which exhibits weak glutamate--cysteine ligase activity. This Mycobacterium avium (strain 104) protein is Putative glutamate--cysteine ligase 2.